A 118-amino-acid chain; its full sequence is Large ribosomal subunit protein uL18 (118 aa).

The protein belongs to the universal ribosomal protein uL18 family. As to quaternary structure, part of the 50S ribosomal subunit; part of the 5S rRNA/L5/L18/L25 subcomplex. Contacts the 5S and 23S rRNAs.

This is one of the proteins that bind and probably mediate the attachment of the 5S RNA into the large ribosomal subunit, where it forms part of the central protuberance. This Rhizorhabdus wittichii (strain DSM 6014 / CCUG 31198 / JCM 15750 / NBRC 105917 / EY 4224 / RW1) (Sphingomonas wittichii) protein is Large ribosomal subunit protein uL18.